A 271-amino-acid chain; its full sequence is Aquaporin-1 (271 aa).

Over 1–11 the chain is Cytoplasmic; that stretch reads MASEFKKKLFW. A helical membrane pass occupies residues 12 to 29; the sequence is RAVVAEFLAMILFVFISI. Residues 30–48 are Extracellular-facing; it reads GSALGFNYPVRNNQTAGAA. N42 carries N-linked (GlcNAc...) asparagine glycosylation. Residues 49–67 traverse the membrane as a helical segment; it reads QDNVKVSLAFGLSIATLAQ. The Cytoplasmic segment spans residues 68 to 70; that stretch reads SVG. An intramembrane segment occupies 71-84; it reads HISGAHLNPAVTLG. The NPA 1 motif lies at 78–80; it reads NPA. Topologically, residues 85–92 are cytoplasmic; the sequence is LLLSCQIS. A helical membrane pass occupies residues 93 to 111; sequence ILRAVMYIIAQCVGAIVAT. Over 112–135 the chain is Extracellular; sequence AILSGITSSLPDNSLGRNELAPGV. A helical membrane pass occupies residues 136–155; it reads NSGQGLGIEIIGTLQLVLCV. Topologically, residues 156–165 are cytoplasmic; that stretch reads LATTDRRRRD. A helical transmembrane segment spans residues 166–183; it reads LGGSGPLAIGLSVALGHL. Residues 184–188 are Extracellular-facing; it reads LAIDY. Residues 189 to 201 lie within the membrane without spanning it; sequence TGCGINPARSFGS. The NPA 2 signature appears at 194–196; the sequence is NPA. At 202–208 the chain is on the extracellular side; it reads SVITHNF. The helical transmembrane segment at 209–226 threads the bilayer; sequence KDHWIFWVGPFIGGALAV. Residues 227 to 271 are Cytoplasmic-facing; the sequence is LIYDFILAPRSSDLTDRVKVWTSGQVEEYELDGDDINSRVEMKPK. S249 is subject to Phosphoserine. Phosphotyrosine is present on Y255. S264 bears the Phosphoserine mark.

This sequence belongs to the MIP/aquaporin (TC 1.A.8) family. In terms of assembly, homotetramer; each monomer provides an independent water pore. Component of the ankyrin-1 complex in the erythrocyte, composed of ANK1, RHCE, RHAG, SLC4A1, EPB42, GYPA, GYPB and AQP1. Interacts with EPHB2; involved in endolymph production in the inner ear. Identified in a complex with STOM. Interacts (via the N-terminal) with ANK1 (via ANK 1-5 repeats). Interacts (via the C-terminal) with EPB42.

It localises to the cell membrane. It carries out the reaction H2O(in) = H2O(out). The enzyme catalyses nitric oxide(out) = nitric oxide(in). The catalysed reaction is CO2(out) = CO2(in). It catalyses the reaction glycerol(in) = glycerol(out). It carries out the reaction H2O2(out) = H2O2(in). The enzyme catalyses K(+)(in) = K(+)(out). The catalysed reaction is Na(+)(in) = Na(+)(out). Functionally, forms a water channel that facilitates the transport of water across cell membranes, playing a crucial role in water homeostasis in various tissues. Could also be permeable to small solutes including hydrogen peroxide, glycerol and gases such as amonnia (NH3), nitric oxide (NO) and carbon dioxide (CO2). Recruited to the ankyrin-1 complex, a multiprotein complex of the erythrocyte membrane, it could be part of a CO2 metabolon, linking facilitated diffusion of CO2 across the membrane, anion exchange of Cl(-)/HCO3(-) and interconversion of dissolved CO2 and carbonic acid in the cytosol. In vitro, it shows non-selective gated cation channel activity and may be permeable to cations like K(+) and Na(+) in vivo. The sequence is that of Aquaporin-1 from Canis lupus familiaris (Dog).